The chain runs to 551 residues: Calnexin homolog (551 aa).

The N-terminal stretch at 1 to 26 (MVDRKEIPLAMGLLAVLLFFVASSSS) is a signal peptide. The Lumenal segment spans residues 27-480 (FHLVRASDEV…EKGEKQPNLT (454 aa)). Ca(2+)-binding residues include serine 44 and aspartate 75. The cysteines at positions 118 and 153 are disulfide-linked. The an alpha-D-glucoside site is built by tyrosine 122 and lysine 124. N-linked (GlcNAc...) asparagine glycosylation occurs at asparagine 140. 2 residues coordinate an alpha-D-glucoside: tyrosine 144 and aspartate 151. Residues 226-330 (ALIPSKTIPD…CGEWKRPTKS (105 aa)) form a disordered region. The interval 233 to 364 (IPDPDDKKPE…QEIPNPEYFE (132 aa)) is p domain (Extended arm). 2 stretches are compositionally biased toward basic and acidic residues: residues 234–269 (PDPDDKKPEDWDERAKIPDPEAVKPEDWDEDAPREI) and 276–295 (KPEPWLDHEPEVDDPEAKPE). 5 repeat units span residues 235–246 (DPDDKKPEDWDE), 252–263 (DPEAVKPEDWDE), 271–282 (DEEAEKPEPWLD), 289–299 (DPEAKPEDWDD), and 303–313 (GEWEAPKIENP). 4 X approximate repeats regions lie at residues 235-299 (DPDD…DWDD) and 303-360 (GEWE…IPNP). The segment covering 296-305 (DWDDEEDGEW) has biased composition (acidic residues). Cysteine 315 and cysteine 321 are joined by a disulfide. 3 consecutive repeat copies span residues 322 to 332 (GEWKRPTKSNP), 336 to 346 (GKWSAPYIDNP), and 350 to 360 (GIWKPQEIPNP). Glutamate 379 contacts an alpha-D-glucoside. Residue aspartate 390 participates in Ca(2+) binding. Asparagine 478 carries N-linked (GlcNAc...) asparagine glycosylation. Residues 481 to 501 (IGIIVSVVIVFVSIFFRLIFG) form a helical membrane-spanning segment. Residues 502 to 551 (GKKPANVEANVEKKKTNTETTSKQDGGEKEDNKEKEETANPPRRRPKRDN) lie on the Cytoplasmic side of the membrane. The segment at 510 to 551 (ANVEKKKTNTETTSKQDGGEKEDNKEKEETANPPRRRPKRDN) is disordered. The span at 526 to 539 (DGGEKEDNKEKEET) shows a compositional bias: basic and acidic residues.

It belongs to the calreticulin family. As to expression, in vegetative and flowering tissues.

The protein localises to the endoplasmic reticulum membrane. Calcium-binding protein that interacts with newly synthesized monoglucosylated glycoproteins in the endoplasmic reticulum. It may act in assisting protein assembly and/or in the retention within the ER of unassembled protein subunits. It seems to play a major role in the quality control apparatus of the ER by the retention of incorrectly folded proteins. In Pisum sativum (Garden pea), this protein is Calnexin homolog.